The following is a 583-amino-acid chain: SHC-transforming protein 1 (583 aa).

Methionine 1 is subject to N-acetylmethionine. A disordered region spans residues 1–92 (MDLLPPKPKY…EPGRAADDGE (92 aa)). Low complexity predominate over residues 16 to 44 (ESLSSLEEGASGSTPPEELPSPSASSLGP). Phosphoserine is present on residues serine 36 and serine 139. Residue lysine 154 is modified to N6-acetyllysine. The PID domain occupies 156 to 339 (MGPGVSYLVR…AGFDGSAWDE (184 aa)). The CH1 stretch occupies residues 340–487 (EEEEPPDHQY…SMAEQLRGEP (148 aa)). 2 positions are modified to phosphotyrosine: tyrosine 349 and tyrosine 350. Residues 372 to 384 (AAPGAARPTAPNA) are compositionally biased toward low complexity. The interval 372–415 (AAPGAARPTAPNAQTPSHLGATLPVGQPVGGDPEVRKQMPPPPP) is disordered. Tyrosine 427 bears the Phosphotyrosine mark. At serine 453 the chain carries Phosphoserine. The SH2 domain occupies 488 to 579 (WFHGKLSRRE…GSELCLQQPV (92 aa)).

As to quaternary structure, interacts with CPNE3; this interaction may mediate the binding of CPNE3 with ERBB2. Interacts with the NPXY motif of tyrosine-phosphorylated IGF1R and INSR in vitro via the PID domain. Once activated, binds to GRB2. Interacts with tyrosine-phosphorylated CD3T and DDR2. Interacts with the N-terminal region of SH2B2. Interacts with phosphorylated LRP1 and IRS4. Interacts with INPP5D/SHIP1 and INPPL1/SHIP2. Interacts with TRIM31. Interacts with PTPN6/SHP (tyrosine phosphorylated). Identified in a complex containing FGFR4, NCAM1, CDH2, PLCG1, FRS2, SRC, SHC1, GAP43 and CTT. Interacts with ALK, GAB2, GRB7 and KIT. Interacts with FLT4 (tyrosine-phosphorylated). Interacts with EPHB1 and GRB2; activates the MAPK/ERK cascade to regulate cell migration. Interacts with PDGFRB (tyrosine-phosphorylated). Interacts with ERBB4. Interacts with TEK/TIE2 (tyrosine-phosphorylated). Interacts with the Trk receptors NTRK1, NTRK2 and NTRK3; in a phosphotyrosine-dependent manner. Interacts with PTK2/FAK1. Interacts with CEACAM1; this interaction is CEACAM1-phosphorylation-dependent and mediates interaction with EGFR or INSR resulting in decrease coupling of SHC1 to the MAPK3/ERK1-MAPK1/ERK2 pathway. Interacts (via PID domain) with PEAK1 (when phosphorylated at 'Tyr-1188'). Found in a complex with PPP1CA, PPP1CC, SHC1 and PEAK1. (Microbial infection) Interacts with herpes simplex virus 1 UL46. Post-translationally, phosphorylated by activated epidermal growth factor receptor. Phosphorylated in response to FLT4 and KIT signaling. Isoform p46Shc and isoform p52Shc are phosphorylated on tyrosine residues of the Pro-rich domain. Isoform p66Shc is phosphorylated on Ser-36 by PRKCB upon treatment with insulin, hydrogen peroxide or irradiation with ultraviolet light. Tyrosine phosphorylated in response to FLT3 signaling. Tyrosine phosphorylated by activated PTK2B/PYK2. Tyrosine phosphorylated by ligand-activated ALK. Tyrosine phosphorylated by ligand-activated PDGFRB. Tyrosine phosphorylated by TEK/TIE2. May be tyrosine phosphorylated by activated PTK2/FAK1; tyrosine phosphorylation was seen in an astrocytoma biopsy, where PTK2/FAK1 kinase activity is high, but not in normal brain tissue. Isoform p52Shc dephosphorylation by PTPN2 may regulate interaction with GRB2. As to expression, widely expressed. Expressed in neural stem cells but absent in mature neurons.

It localises to the cytoplasm. Its subcellular location is the cell junction. The protein resides in the focal adhesion. It is found in the mitochondrion matrix. The protein localises to the mitochondrion. Its function is as follows. Signaling adapter that couples activated growth factor receptors to signaling pathways. Participates in a signaling cascade initiated by activated KIT and KITLG/SCF. Isoform p46Shc and isoform p52Shc, once phosphorylated, couple activated receptor tyrosine kinases to Ras via the recruitment of the GRB2/SOS complex and are implicated in the cytoplasmic propagation of mitogenic signals. Isoform p46Shc and isoform p52Shc may thus function as initiators of the Ras signaling cascade in various non-neuronal systems. Isoform p66Shc does not mediate Ras activation, but is involved in signal transduction pathways that regulate the cellular response to oxidative stress and life span. Isoform p66Shc acts as a downstream target of the tumor suppressor p53 and is indispensable for the ability of stress-activated p53 to induce elevation of intracellular oxidants, cytochrome c release and apoptosis. The expression of isoform p66Shc has been correlated with life span. Participates in signaling downstream of the angiopoietin receptor TEK/TIE2, and plays a role in the regulation of endothelial cell migration and sprouting angiogenesis. The sequence is that of SHC-transforming protein 1 (SHC1) from Homo sapiens (Human).